The chain runs to 1289 residues: Trafficking protein particle complex II-specific subunit 120 (1289 aa).

Over residues 354-365 (STGISPVDSNSK) the composition is skewed to polar residues. Residues 354-374 (STGISPVDSNSKATASTTASS) form a disordered region. Phosphoserine is present on residues Ser-379 and Ser-387.

It belongs to the TRS120 family. As to quaternary structure, part of the multisubunit TRAPP (transport protein particle) II complex composed of BET3, BET5, TRS20, TRS23, TRS31, TRS33, TRS65, TRS120 and TRS130. Interacts directly with TRS65.

Its subcellular location is the golgi apparatus. The protein resides in the cis-Golgi network. Its function is as follows. Specific subunit of the TRAPP II complex, a highly conserved vesicle tethering complex that functions in the late Golgi as a guanine nucleotide exchanger (GEF) for the Golgi YPT1 GTPase. TRS120 plays a role in the YPT GEF activity of TRAPP II in concert with the two other TRAPP II-specific subunits TRS65 and TRS130. In Saccharomyces cerevisiae (strain ATCC 204508 / S288c) (Baker's yeast), this protein is Trafficking protein particle complex II-specific subunit 120 (TRS120).